Consider the following 107-residue polypeptide: Nucleoid-associated protein GOX0603 (107 aa).

The protein belongs to the YbaB/EbfC family. Homodimer.

The protein localises to the cytoplasm. It is found in the nucleoid. Functionally, binds to DNA and alters its conformation. May be involved in regulation of gene expression, nucleoid organization and DNA protection. The sequence is that of Nucleoid-associated protein GOX0603 from Gluconobacter oxydans (strain 621H) (Gluconobacter suboxydans).